Reading from the N-terminus, the 592-residue chain is Threonine dehydratase biosynthetic, chloroplastic (592 aa).

The transit peptide at methionine 1–glutamate 91 directs the protein to the chloroplast. Lysine 141 is modified (N6-(pyridoxal phosphate)lysine). 2 consecutive ACT-like domains span residues alanine 419–threonine 490 and valine 512–aspartate 583.

Belongs to the serine/threonine dehydratase family. Pyridoxal 5'-phosphate serves as cofactor.

The protein resides in the plastid. The protein localises to the chloroplast. It catalyses the reaction L-threonine = 2-oxobutanoate + NH4(+). The protein operates within amino-acid biosynthesis; L-isoleucine biosynthesis; 2-oxobutanoate from L-threonine: step 1/1. Its activity is regulated as follows. Allosterically inhibited by isoleucine. Strain GM11b is isoleucine feedback insensitive and is resistant to the antimetabolite L-O-methylthreonine. Catalyzes the formation of alpha-ketobutyrate from threonine in a two-step reaction. The first step is a dehydration of threonine, followed by rehydration and liberation of ammonia. In Arabidopsis thaliana (Mouse-ear cress), this protein is Threonine dehydratase biosynthetic, chloroplastic (OMR1).